The following is a 130-amino-acid chain: Small ribosomal subunit protein uS9 (130 aa).

Positions 105–130 (TRDPRMKERKKYGLKGARRAPQFSKR) are disordered. The segment covering 111–130 (KERKKYGLKGARRAPQFSKR) has biased composition (basic residues).

It belongs to the universal ribosomal protein uS9 family.

The sequence is that of Small ribosomal subunit protein uS9 from Bacillus pumilus (strain SAFR-032).